Consider the following 430-residue polypeptide: Trigger factor (430 aa).

The PPIase FKBP-type domain maps to G163–P248.

It belongs to the FKBP-type PPIase family. Tig subfamily.

It is found in the cytoplasm. It catalyses the reaction [protein]-peptidylproline (omega=180) = [protein]-peptidylproline (omega=0). In terms of biological role, involved in protein export. Acts as a chaperone by maintaining the newly synthesized protein in an open conformation. Functions as a peptidyl-prolyl cis-trans isomerase. The polypeptide is Trigger factor (Clostridium kluyveri (strain NBRC 12016)).